Consider the following 558-residue polypeptide: NAD(P)H-quinone oxidoreductase chain 4 (558 aa).

Transmembrane regions (helical) follow at residues Phe25–Ile45, Trp56–Gly76, Leu111–Phe131, Pro133–Val153, Leu157–Trp177, Phe189–Phe209, Gly230–Val250, Thr264–Leu284, Phe298–Phe318, Ile327–Ser347, Ala353–Ala373, Ile395–Val417, Ile438–Met458, and Ile485–Met505.

The protein belongs to the complex I subunit 4 family.

Its subcellular location is the cellular thylakoid membrane. It catalyses the reaction a plastoquinone + NADH + (n+1) H(+)(in) = a plastoquinol + NAD(+) + n H(+)(out). The catalysed reaction is a plastoquinone + NADPH + (n+1) H(+)(in) = a plastoquinol + NADP(+) + n H(+)(out). Its function is as follows. NDH-1 shuttles electrons from NAD(P)H, via FMN and iron-sulfur (Fe-S) centers, to quinones in the respiratory chain. The immediate electron acceptor for the enzyme in this species is believed to be plastoquinone. Couples the redox reaction to proton translocation (for every two electrons transferred, four hydrogen ions are translocated across the cytoplasmic membrane), and thus conserves the redox energy in a proton gradient. In Prochlorococcus marinus (strain MIT 9211), this protein is NAD(P)H-quinone oxidoreductase chain 4.